Here is a 537-residue protein sequence, read N- to C-terminus: RNA polymerase sigma-54 factor 2 (537 aa).

The segment at 52–90 is disordered; sequence ANDEASGGEAPAEAGQFSDSDGGHNDEPGGGPGEAFEPG. The span at 55–66 shows a compositional bias: low complexity; it reads EASGGEAPAEAG. The H-T-H motif DNA-binding region spans 403 to 422; it reads NLKAVADAIQMHESTVSRVT. The short motif at 492–500 is the RPON box element; that stretch reads ARRTVAKYR. The disordered stretch occupies residues 507-537; that stretch reads SSVQRRRDKQSALGNVLSTAMSDRSRNPEPA. Residues 518–528 are compositionally biased toward polar residues; the sequence is ALGNVLSTAMS.

This sequence belongs to the sigma-54 factor family.

In terms of biological role, sigma factors are initiation factors that promote the attachment of RNA polymerase to specific initiation sites and are then released. This sigma factor is responsible for the expression of the nitrogen fixation genes. This is RNA polymerase sigma-54 factor 2 (rpoN2) from Bradyrhizobium diazoefficiens (strain JCM 10833 / BCRC 13528 / IAM 13628 / NBRC 14792 / USDA 110).